A 402-amino-acid polypeptide reads, in one-letter code: 5-methylphenazine-1-carboxylate 1-monooxygenase (402 aa).

Residues 14–15, 35–36, 43–45, Arg-106, Val-132, Arg-191, and Asp-310 each bind FAD; these read IG, ES, and LGV. A compositionally biased stretch (basic and acidic residues) spans 368 to 385; sequence REKEEWAAASRPKTEKSA. A disordered region spans residues 368-402; sequence REKEEWAAASRPKTEKSAALEAITGSYRNQVERPR.

As to quaternary structure, monomer in solution. Probably interacts transiently with PhzM. FAD serves as cofactor.

The catalysed reaction is 5-methyl-phenazine-1-carboxylate + NADH + O2 + 2 H(+) = pyocyanin + CO2 + NAD(+) + H2O. It functions in the pathway secondary metabolite biosynthesis; pyocyanine biosynthesis. Involved in the biosynthesis of pyocyanine, a blue-pigmented phenazine derivative, which plays a role in virulence. Catalyzes the oxidative decarboxylation of 5-methylphenazine-1-carboxylate (5-methyl-PCA) to pyocyanine. Can also act on phenazine-1-carboxylate (PCA), converting it into 1-hydroxyphenazine (1-HP). However, PCA is a poor substrate. The protein is 5-methylphenazine-1-carboxylate 1-monooxygenase of Pseudomonas aeruginosa (strain ATCC 15692 / DSM 22644 / CIP 104116 / JCM 14847 / LMG 12228 / 1C / PRS 101 / PAO1).